Reading from the N-terminus, the 411-residue chain is Putative binding protein BRA0748/BS1330_II0741 (411 aa).

An N-terminal signal peptide occupies residues 1–25 (MLIRKWKAGLLAGLSILALASSADA).

Belongs to the bacterial solute-binding protein 1 family. In terms of assembly, the complex is composed of two ATP-binding proteins (BRA0745), two transmembrane proteins (BRA0749) and a solute-binding protein (BRA0748).

The protein localises to the periplasm. In terms of biological role, probably part of an ABC transporter complex. The chain is Putative binding protein BRA0748/BS1330_II0741 from Brucella suis biovar 1 (strain 1330).